Reading from the N-terminus, the 415-residue chain is Phosphoglycerate kinase (415 aa).

The (2R)-3-phosphoglycerate site is built by valine 22, aspartate 23, phenylalanine 24, asparagine 25, glutamine 37, arginine 38, serine 61, histidine 62, glycine 64, arginine 65, arginine 121, histidine 168, and arginine 169. An ADP-binding site is contributed by glycine 212. Glycine 212 contacts CDP. AMP is bound by residues alanine 213 and lysine 214. Alanine 213 contacts ATP. Position 213 (alanine 213) interacts with Mg(2+). Mg(2+) contacts are provided by alanine 216 and aspartate 217. CDP is bound at residue aspartate 217. Lysine 218 is an AMP binding site. Lysine 218 is an ATP binding site. Glycine 236 contributes to the ADP binding site. Position 236 (glycine 236) interacts with CDP. AMP contacts are provided by glycine 237 and glycine 311. Glycine 237 and glycine 311 together coordinate ATP. CDP contacts are provided by glycine 336 and phenylalanine 341. Phenylalanine 341 contacts ADP. Glutamate 342 contributes to the AMP binding site. Positions 342, 373, and 374 each coordinate ATP. Aspartate 373 is a Mg(2+) binding site.

Belongs to the phosphoglycerate kinase family. Monomer. The cofactor is Mg(2+).

It is found in the cytoplasm. The enzyme catalyses (2R)-3-phosphoglycerate + ATP = (2R)-3-phospho-glyceroyl phosphate + ADP. It functions in the pathway carbohydrate degradation; glycolysis; pyruvate from D-glyceraldehyde 3-phosphate: step 2/5. In terms of biological role, enzyme of the glycolytic pathway. Glycolysis is essential in glial cells but not in neurons; neurons rely on the citric acid cycle for their energy needs, and on lactate and alanine secreted into the hemolymph by glial cells to fuel it. This Drosophila melanogaster (Fruit fly) protein is Phosphoglycerate kinase.